Reading from the N-terminus, the 96-residue chain is YcgL domain-containing protein VS_0884 (96 aa).

One can recognise a YcgL domain in the interval 1–84; the sequence is MLCSIYKSSK…PPVNELELHK (84 aa).

The sequence is that of YcgL domain-containing protein VS_0884 from Vibrio atlanticus (strain LGP32) (Vibrio splendidus (strain Mel32)).